Consider the following 181-residue polypeptide: Ribulose bisphosphate carboxylase small subunit, chloroplastic 2 (181 aa).

A chloroplast-targeting transit peptide spans 1-57 (MAFLIMSSAAAVATGTNAAQASMIAPFTGLKSATSFPVSRKQNLDITSIASNGGRVQ).

The protein belongs to the RuBisCO small chain family. In terms of assembly, heterohexadecamer of 8 large and 8 small subunits.

It is found in the plastid. Its subcellular location is the chloroplast. Functionally, ruBisCO catalyzes two reactions: the carboxylation of D-ribulose 1,5-bisphosphate, the primary event in carbon dioxide fixation, as well as the oxidative fragmentation of the pentose substrate. Both reactions occur simultaneously and in competition at the same active site. Although the small subunit is not catalytic it is essential for maximal activity. In Nicotiana sylvestris (Wood tobacco), this protein is Ribulose bisphosphate carboxylase small subunit, chloroplastic 2.